We begin with the raw amino-acid sequence, 822 residues long: Integrator complex assembly factor BRAT1 (822 aa).

Residues 100–200 (LGLFGESGAP…WPMCAQKIVN (101 aa)) form a required for interaction with NDFIP1 region. 2 HEAT repeats span residues 495–531 (LLFLGELFPILQKRLCSPCWEVRDSALEFLTHLIRHW) and 544–576 (SEVPTLALQLLQDPESYVRASAVGAAGQLSSQG). Ser743 is subject to Phosphoserine. The BRAT1-like motif motif lies at 820–822 (DCY). Position 821 (Cys821) interacts with Zn(2+).

Belongs to the BRAT1 family. In terms of assembly, part of the multiprotein complex composed of BRAT1, WDR73, as well as integrator complex subunits INTS9 and INTS11. Interacts with BRCA1 and ATM. Interacts with MTOR and RPTOR. Interacts with NDFIP1. Interacts with SMC1A and PRKDC. Ubiquitinated by NEDD4, NEDD4L and ITCH; mono- and polyubiquitinated forms are detected. High levels detected in the cortex and much lower levels detected in the cerebellum, spinal cord and lung (at protein level).

Its subcellular location is the nucleus. The protein resides in the cytoplasm. Functionally, component of a multiprotein complex required for the assembly of the RNA endonuclease module of the integrator complex. Associates with INTS9 and INTS11 in the cytoplasm and blocks the active site of INTS11 to inhibit the endonuclease activity of INTS11 before formation of the full integrator complex. Following dissociation of WDR73 of the complex, BRAT1 facilitates the nuclear import of the INTS9-INTS11 heterodimer. In the nucleus, INTS4 is integrated to the INTS9-INTS11 heterodimer and BRAT1 is released from the mature RNA endonuclease module by inositol hexakisphosphate (InsP6). BRAT1 is also involved in DNA damage response; activates kinases ATM, SMC1A and PRKDC by modulating their phosphorylation status following ionizing radiation (IR) stress. Plays a role in regulating mitochondrial function and cell proliferation. Required for protein stability of MTOR and MTOR-related proteins, and cell cycle progress by growth factors. The chain is Integrator complex assembly factor BRAT1 from Mus musculus (Mouse).